Consider the following 365-residue polypeptide: MSSSVEQKKGPTRQRKCGFCKSNRDKECGQLLISENQKVAAHHKCMLFSSALVSSHSDNESLGGFSIEDVQKEIKRGTKLMCSLCHCPGATIGCDVKTCHRTYHYHCALHDKAQIREKPSQGIYMVYCRKHKKTAHNSEADLEESFNEHELEPSSPKSKKKSRKGRPRKTNFKGLSEDTRSTSSHGTDEMESSSYRDRSPHRSSPSDTRPKCGFCHVGEEENEARGKLHIFNAKKAAAHYKCMLFSSGTVQLTTTSRAEFGDFDIKTVLQEIKRGKRMKCTLCSQPGATIGCEIKACVKTYHYHCGVQDKAKYIENMSRGIYKLYCKNHSGNDERDEEDEERESKSRGKVEIDQQQLTQQQLNGN.

Ser2 carries the N-acetylserine modification. Short sequence motifs (nuclear localization signal) lie at residues 13–16 (RQRK) and 129–133 (RKHKK). The segment at 14–52 (QRKCGFCKSNRDKECGQLLISENQKVAAHHKCMLFSSAL) adopts a C2HC pre-PHD-type 1 zinc-finger fold. Residues 14-132 (QRKCGFCKSN…IYMVYCRKHK (119 aa)) form an extended PHD1 domain (ePHD1) region. The segment at 80–132 (LMCSLCHCPGATIGCDVKTCHRTYHYHCALHDKAQIREKPSQGIYMVYCRKHK) adopts a PHD-type 1 zinc-finger fold. 3 positions are modified to phosphoserine: Ser138, Ser145, and Ser155. The tract at residues 139–211 (EADLEESFNE…RSSPSDTRPK (73 aa)) is disordered. Residues 157–169 (KSKKKSRKGRPRK) carry the Nucleolar localization signal motif. The span at 157 to 171 (KSKKKSRKGRPRKTN) shows a compositional bias: basic residues. Residue Lys173 forms a Glycyl lysine isopeptide (Lys-Gly) (interchain with G-Cter in SUMO2) linkage. Phosphoserine is present on residues Ser183 and Ser199. The C2HC pre-PHD-type 2 zinc finger occupies 209 to 249 (RPKCGFCHVGEEENEARGKLHIFNAKKAAAHYKCMLFSSGT). An extended PHD2 domain (ePHD2) region spans residues 209–330 (RPKCGFCHVG…IYKLYCKNHS (122 aa)). Lys227 is covalently cross-linked (Glycyl lysine isopeptide (Lys-Gly) (interchain with G-Cter in SUMO2)). The segment at 278-330 (MKCTLCSQPGATIGCEIKACVKTYHYHCGVQDKAKYIENMSRGIYKLYCKNHS) adopts a PHD-type 2 zinc-finger fold. The segment at 330 to 365 (SGNDERDEEDEERESKSRGKVEIDQQQLTQQQLNGN) is disordered. Residues 342-352 (RESKSRGKVEI) show a composition bias toward basic and acidic residues. A compositionally biased stretch (low complexity) spans 354–365 (QQQLTQQQLNGN). The residue at position 358 (Thr358) is a Phosphothreonine.

As to quaternary structure, interacts with UBTF. Interacts with the NuRD complex component RBBP4 (via the nucleolar localization motif), the interaction mediates transcriptional repression activity.

It is found in the nucleus. The protein resides in the nucleolus. Its subcellular location is the chromosome. It localises to the centromere. The protein localises to the kinetochore. Transcriptional regulator that associates with ribosomal RNA promoters and suppresses ribosomal RNA (rRNA) transcription. This Pongo abelii (Sumatran orangutan) protein is PHD finger protein 6 (PHF6).